The following is a 197-amino-acid chain: 7-methyl-GTP pyrophosphatase (197 aa).

The Proton acceptor role is filled by D72.

Belongs to the Maf family. YceF subfamily. It depends on a divalent metal cation as a cofactor.

It is found in the cytoplasm. It carries out the reaction N(7)-methyl-GTP + H2O = N(7)-methyl-GMP + diphosphate + H(+). Functionally, nucleoside triphosphate pyrophosphatase that hydrolyzes 7-methyl-GTP (m(7)GTP). May have a dual role in cell division arrest and in preventing the incorporation of modified nucleotides into cellular nucleic acids. The chain is 7-methyl-GTP pyrophosphatase from Bordetella avium (strain 197N).